A 486-amino-acid chain; its full sequence is Vesicular GABA transporter (486 aa).

Residues 1–93 (MASNRFQNLQ…EASEPISALQ (93 aa)) lie on the Cytoplasmic side of the membrane. A compositionally biased stretch (polar residues) spans 29–46 (LNEVPSYQNQPQTGESGS). The tract at residues 29–85 (LNEVPSYQNQPQTGESGSNPPPHDRLEPIQESVVSEQPQKDDINKQEEAKDDGHGEA) is disordered. A compositionally biased stretch (basic and acidic residues) spans 66-85 (PQKDDINKQEEAKDDGHGEA). A helical membrane pass occupies residues 94–114 (AAWNVTNAIQGMFIVGLPIAV). At 115–119 (KVGGW) the chain is on the lumenal, vesicle side. The helical transmembrane segment at 120 to 140 (WSIGAMVGVAYVCYWTGVLLI) threads the bilayer. The Cytoplasmic segment spans residues 141-167 (ECLYENGVKKRKTYREIADFYKPGFGK). A helical membrane pass occupies residues 168 to 188 (WVLAAQLTELLSTCIIYLVLA). Residues 189–203 (ADLLQSCFPSVDKAG) are Lumenal, vesicle-facing. Residues 204–224 (WMMITSASLLTCSFLDDLQIV) form a helical membrane-spanning segment. Over 225–228 (SRLS) the chain is Cytoplasmic. A helical membrane pass occupies residues 229-249 (FFNAISHLIVNLIMVLYCLSF). At 250-263 (VSQWSFSTITFSLN) the chain is on the lumenal, vesicle side. Residues 264-284 (INTLPTIVGMVVFGYTSHIFL) form a helical membrane-spanning segment. Over 285 to 305 (PNLEGNMKNPAQFNVMLKWSH) the chain is Cytoplasmic. A helical transmembrane segment spans residues 306 to 326 (IAAAVFKVVFGMLGFLTFGEL). Topologically, residues 327–341 (TQEEISNSLPNQSFK) are lumenal, vesicle. A glycan (N-linked (GlcNAc...) asparagine) is linked at Asn337. A helical transmembrane segment spans residues 342–362 (ILVNLILVVKALLSYPLPFYA). At 363–398 (AVQLLKNNLFLGYPQTPFTSCYSPDKSLREWAVTLR) the chain is on the cytoplasmic side. A helical membrane pass occupies residues 399–419 (IILVLFTLFVALSVPYLVELM). Topologically, residues 420–421 (GL) are lumenal, vesicle. The helical transmembrane segment at 422-442 (VGNITGTMLSFIWPALFHLYI) threads the bilayer. At 443-457 (KEKTLNNFEKRFDQG) the chain is on the cytoplasmic side. Residues 458-478 (IIIMGCSVCISGVYFSSMELL) form a helical membrane-spanning segment. Over 479–486 (RAINSADS) the chain is Lumenal, vesicle.

This sequence belongs to the amino acid/polyamine transporter 2 family.

It is found in the cytoplasmic vesicle membrane. Involved in the uptake of GABA into the synaptic vesicles. This chain is Vesicular GABA transporter (unc-47), found in Caenorhabditis elegans.